The following is a 398-amino-acid chain: Argininosuccinate synthase (398 aa).

9-17 lines the ATP pocket; the sequence is AYSGGLDTS. Residues Y87 and S92 each coordinate L-citrulline. G117 lines the ATP pocket. L-aspartate is bound by residues T119, N123, and D124. N123 lines the L-citrulline pocket. Positions 127, 176, 185, 261, and 273 each coordinate L-citrulline.

It belongs to the argininosuccinate synthase family. Type 1 subfamily. In terms of assembly, homotetramer.

The protein resides in the cytoplasm. It carries out the reaction L-citrulline + L-aspartate + ATP = 2-(N(omega)-L-arginino)succinate + AMP + diphosphate + H(+). The protein operates within amino-acid biosynthesis; L-arginine biosynthesis; L-arginine from L-ornithine and carbamoyl phosphate: step 2/3. This chain is Argininosuccinate synthase, found in Clostridium tetani (strain Massachusetts / E88).